Consider the following 151-residue polypeptide: MQVILKEKVENLGVLGDIVNVKPGYARNFLIPFGKAVQATQANIKAFEAQKAELEKAEKARFEAAVAVADAIKDKVYTIAAQAGEGGKLFGSVGTAEVAEAVSNQSGKKIEKSQVRMPEGVIRSIGEFELTVHVYTDVDADIKVNVVAAEA.

This sequence belongs to the bacterial ribosomal protein bL9 family.

Binds to the 23S rRNA. The polypeptide is Large ribosomal subunit protein bL9 (Francisella tularensis subsp. tularensis (strain FSC 198)).